The following is a 340-amino-acid chain: Centromere protein N (340 aa).

Serine 227 and serine 236 each carry phosphoserine.

It belongs to the CENP-N/CHL4 family. As to quaternary structure, component of the CENPA-NAC complex, at least composed of CENPA, CENPC, CENPH, CENPM, CENPN, CENPT and CENPU. The CENPA-NAC complex interacts with the CENPA-CAD complex, composed of CENPI, CENPK, CENPL, CENPO, CENPP, CENPQ, CENPR and CENPS. Interacts directly with CENPA. Identified in a centromere complex containing histones H2A, H2B and H4, and at least CENPA, CENPB, CENPC, CENPT, CENPN, HJURP, SUPT16H, SSRP1 and RSF1.

It is found in the nucleus. The protein localises to the chromosome. The protein resides in the centromere. It localises to the kinetochore. Functionally, component of the CENPA-NAC (nucleosome-associated) complex, a complex that plays a central role in assembly of kinetochore proteins, mitotic progression and chromosome segregation. The CENPA-NAC complex recruits the CENPA-CAD (nucleosome distal) complex and may be involved in incorporation of newly synthesized CENPA into centromeres. CENPN is the first protein to bind specifically to CENPA nucleosomes and the direct binding of CENPA nucleosomes by CENPN is required for centromere assembly. Required for chromosome congression and efficiently align the chromosomes on a metaphase plate. The chain is Centromere protein N (Cenpn) from Rattus norvegicus (Rat).